We begin with the raw amino-acid sequence, 72 residues long: Translation initiation factor IF-1 (72 aa).

One can recognise an S1-like domain in the interval 1-72 (MAKEDNIEMQ…SKGRIVFRSR (72 aa)).

This sequence belongs to the IF-1 family. In terms of assembly, component of the 30S ribosomal translation pre-initiation complex which assembles on the 30S ribosome in the order IF-2 and IF-3, IF-1 and N-formylmethionyl-tRNA(fMet); mRNA recruitment can occur at any time during PIC assembly.

It localises to the cytoplasm. One of the essential components for the initiation of protein synthesis. Stabilizes the binding of IF-2 and IF-3 on the 30S subunit to which N-formylmethionyl-tRNA(fMet) subsequently binds. Helps modulate mRNA selection, yielding the 30S pre-initiation complex (PIC). Upon addition of the 50S ribosomal subunit IF-1, IF-2 and IF-3 are released leaving the mature 70S translation initiation complex. This is Translation initiation factor IF-1 from Klebsiella pneumoniae subsp. pneumoniae (strain ATCC 700721 / MGH 78578).